Here is a 64-residue protein sequence, read N- to C-terminus: Large ribosomal subunit protein bL33 (64 aa).

The protein belongs to the bacterial ribosomal protein bL33 family.

This is Large ribosomal subunit protein bL33 from Synechococcus sp. (strain JA-2-3B'a(2-13)) (Cyanobacteria bacterium Yellowstone B-Prime).